The chain runs to 1192 residues: Reticulon-4 (1192 aa).

Residue M1 is modified to N-acetylmethionine. The disordered stretch occupies residues 1 to 204 (MEDLDQSPLV…ASEPVIRSSA (204 aa)). The Cytoplasmic portion of the chain corresponds to 1–1018 (MEDLDQSPLV…LYWRDIKKTG (1018 aa)). Residues S7 and S15 each carry the phosphoserine modification. The span at 31–53 (PEDEEEEEEEEEEDEDEDLEELE) shows a compositional bias: acidic residues. Residues 65 to 77 (AAPVPTAPAAGAP) show a composition bias toward low complexity. Residues 87-101 (PPAPRGPLPAAPPVA) are compositionally biased toward pro residues. Residue S107 is modified to Phosphoserine. Over residues 110–132 (PSPVSSTVPAPSPLSAAAVSPSK) the composition is skewed to low complexity. Over residues 141 to 150 (ARPPPPPPAS) the composition is skewed to pro residues. Residue S152 is modified to Phosphoserine. A compositionally biased stretch (pro residues) spans 159–173 (WTPPAPAPAAPPSTP). Phosphoserine occurs at positions 181, 182, 184, 361, and 446. Residues 427–458 (DSLEQTNHEKDSESSNDDTSFPSTPEGIKDRS) are disordered. Residue T450 is modified to Phosphothreonine. S511 bears the Phosphoserine mark. The segment covering 722–734 (AKVEQPVPDHSEL) has biased composition (basic and acidic residues). The interval 722–762 (AKVEQPVPDHSELVEDSSPDSEPVDLFSDDSIPDVPQKQDE) is disordered. The segment covering 735 to 753 (VEDSSPDSEPVDLFSDDSI) has biased composition (acidic residues). At S749 the chain carries Phosphoserine. At T858 the chain carries Phosphothreonine. Phosphoserine is present on residues S881 and S991. Positions 1005-1192 (VVDLLYWRDI…KIPGLKRKAE (188 aa)) constitute a Reticulon domain. A helical transmembrane segment spans residues 1019 to 1039 (VVFGASLFLLLSLTVFSIVSV). The Lumenal segment spans residues 1040–1133 (TAYIALALLS…LMWVFTYVGA (94 aa)). K1104 is modified (N6-acetyllysine). A helical membrane pass occupies residues 1134 to 1154 (LFNGLTLLILALISLFSVPVI). Residues 1155-1192 (YERHQAQIDHYLGLANKNVKDAMAKIQAKIPGLKRKAE) are Cytoplasmic-facing.

As to quaternary structure, binds to RTN4R. Interacts with ATL1. Interacts with TMEM170A. Interacts with RTN4IP1. Interacts in trans with CNTNAP1. Interacts with REEP5. Interacts with synaptic plasticity regulator PANTS; the interaction results in enhanced RTN4-mediated inhibition of AMPA receptor clustering. Interacts with GPR50. In terms of assembly, homodimer. Interacts with BAD/Bcl-xl and BCL2. Interact with RTN3. Interacts with NGBR. Interacts with SPTLC1. Interacts with GRAMD4. Interacts with CDH5. Interacts with BACE1 and BACE2. Interacts with REEP5. Interacts with RETREG3. As to quaternary structure, interacts with BACE1 and BACE2. Interacts with TMEM33. In terms of tissue distribution, isoform A: is specifically expressed in brain and testis and weakly in heart and skeletal muscle. Isoform B: widely expressed except for the liver. Highly expressed in endothelial cells and vascular smooth muscle cells, including blood vessels and mesenteric arteries. Isoform C: is expressed in brain, skeletal muscle and adipocytes. Isoform D is testis-specific.

The protein localises to the endoplasmic reticulum membrane. It localises to the cell membrane. It is found in the synapse. Its subcellular location is the cell junction. Functionally, required to induce the formation and stabilization of endoplasmic reticulum (ER) tubules. They regulate membrane morphogenesis in the ER by promoting tubular ER production. They influence nuclear envelope expansion, nuclear pore complex formation and proper localization of inner nuclear membrane proteins. However each isoform have specific functions mainly depending on their tissue expression specificities. Its function is as follows. Developmental neurite growth regulatory factor with a role as a negative regulator of axon-axon adhesion and growth, and as a facilitator of neurite branching. Regulates neurite fasciculation, branching and extension in the developing nervous system. Involved in down-regulation of growth, stabilization of wiring and restriction of plasticity in the adult CNS. Regulates the radial migration of cortical neurons via an RTN4R-LINGO1 containing receptor complex. Acts as a negative regulator of central nervous system angiogenesis. Inhibits spreading, migration and sprouting of primary brain microvascular endothelial cells (MVECs). Also induces the retraction of MVECs lamellipodia and filopodia in a ROCK pathway-dependent manner. In terms of biological role, mainly function in endothelial cells and vascular smooth muscle cells, is also involved in immune system regulation. Modulator of vascular remodeling, promotes the migration of endothelial cells but inhibits the migration of vascular smooth muscle cells. Regulates endothelial sphingolipid biosynthesis with direct effects on vascular function and blood pressure. Inhibits serine palmitoyltransferase, SPTLC1, the rate-limiting enzyme of the novo sphingolipid biosynthetic pathway, thereby controlling production of endothelial sphingosine-1-phosphate (S1P). Required to promote macrophage homing and functions such as cytokine/chemokine gene expression involved in angiogenesis, arteriogenesis and tissue repair. Mediates ICAM1 induced transendothelial migration of leukocytes such as monocytes and neutrophils and acute inflammation. Necessary for immune responses triggered by nucleic acid sensing TLRs, such as TLR9, is required for proper TLR9 location to endolysosomes. Also involved in immune response to LPS. Plays a role in liver regeneration through the modulation of hepatocytes proliferation. Reduces the anti-apoptotic activity of Bcl-xl and Bcl-2. This is likely consecutive to their change in subcellular location, from the mitochondria to the endoplasmic reticulum, after binding and sequestration. With isoform C, inhibits BACE1 activity and amyloid precursor protein processing. Regulates cardiomyocyte apoptosis upon hypoxic conditions. With isoform B, inhibits BACE1 activity and amyloid precursor protein processing. The protein is Reticulon-4 of Homo sapiens (Human).